Reading from the N-terminus, the 552-residue chain is Glucose-6-phosphate isomerase (552 aa).

The active-site Proton donor is Glu-357. Active-site residues include His-388 and Lys-516. The disordered stretch occupies residues 525–552 (ELASTKPPKHDSSTNALIERYRTRGCRS).

The protein belongs to the GPI family.

It localises to the cytoplasm. It catalyses the reaction alpha-D-glucose 6-phosphate = beta-D-fructose 6-phosphate. Its pathway is carbohydrate biosynthesis; gluconeogenesis. It functions in the pathway carbohydrate degradation; glycolysis; D-glyceraldehyde 3-phosphate and glycerone phosphate from D-glucose: step 2/4. Catalyzes the reversible isomerization of glucose-6-phosphate to fructose-6-phosphate. This is Glucose-6-phosphate isomerase from Laribacter hongkongensis (strain HLHK9).